The primary structure comprises 236 residues: Predicted GPI-anchored protein 43 (236 aa).

A signal peptide spans 1–24 (MHQRNHHSILLTLLLYLQSIVALA). N-linked (GlcNAc...) asparagine glycosylation is found at Asn-192, Asn-195, and Asn-198. Gly-208 carries GPI-anchor amidated glycine lipidation. The propeptide at 209 to 236 (SVCLTSSYLNSPIIILCAILTGTLFAMY) is removed in mature form.

Its subcellular location is the cell membrane. This is Predicted GPI-anchored protein 43 (PGA43) from Candida albicans (strain SC5314 / ATCC MYA-2876) (Yeast).